We begin with the raw amino-acid sequence, 213 residues long: Cytochrome c biogenesis ATP-binding export protein CcmA (213 aa).

Residues 3-211 enclose the ABC transporter domain; sequence LTAENLGVRR…QMTGFAGVET (209 aa). 35-42 lines the ATP pocket; it reads GRNGSGKS.

It belongs to the ABC transporter superfamily. CcmA exporter (TC 3.A.1.107) family. The complex is composed of two ATP-binding proteins (CcmA) and two transmembrane proteins (CcmB).

The protein localises to the cell inner membrane. The catalysed reaction is heme b(in) + ATP + H2O = heme b(out) + ADP + phosphate + H(+). Functionally, part of the ABC transporter complex CcmAB involved in the biogenesis of c-type cytochromes; once thought to export heme, this seems not to be the case, but its exact role is uncertain. Responsible for energy coupling to the transport system. The polypeptide is Cytochrome c biogenesis ATP-binding export protein CcmA (Agrobacterium fabrum (strain C58 / ATCC 33970) (Agrobacterium tumefaciens (strain C58))).